The sequence spans 185 residues: Threonylcarbamoyl-AMP synthase (185 aa).

Positions Ser-4–Gly-185 constitute a YrdC-like domain.

This sequence belongs to the SUA5 family. TsaC subfamily.

The protein localises to the cytoplasm. It catalyses the reaction L-threonine + hydrogencarbonate + ATP = L-threonylcarbamoyladenylate + diphosphate + H2O. Its function is as follows. Required for the formation of a threonylcarbamoyl group on adenosine at position 37 (t(6)A37) in tRNAs that read codons beginning with adenine. Catalyzes the conversion of L-threonine, HCO(3)(-)/CO(2) and ATP to give threonylcarbamoyl-AMP (TC-AMP) as the acyladenylate intermediate, with the release of diphosphate. The chain is Threonylcarbamoyl-AMP synthase from Pseudomonas putida (strain ATCC 700007 / DSM 6899 / JCM 31910 / BCRC 17059 / LMG 24140 / F1).